The primary structure comprises 161 residues: Nucleotide-binding protein Tcr_1902 (161 aa).

The protein belongs to the YajQ family.

Nucleotide-binding protein. This chain is Nucleotide-binding protein Tcr_1902, found in Hydrogenovibrio crunogenus (strain DSM 25203 / XCL-2) (Thiomicrospira crunogena).